The following is an 85-amino-acid chain: Augerpeptide-s6a (85 aa).

A signal peptide spans Met-1–Leu-20. The propeptide occupies Gln-21–Arg-43. Cystine bridges form between Cys-54–Cys-65, Cys-58–Cys-70, and Cys-64–Cys-81.

As to expression, expressed by the venom duct.

It localises to the secreted. The protein is Augerpeptide-s6a of Terebra subulata (Chocolate spotted auger).